Here is a 480-residue protein sequence, read N- to C-terminus: Glutamate--tRNA ligase (480 aa).

A 'HIGH' region motif is present at residues 21–31 (PSPTGYLHVGG). Zn(2+) contacts are provided by Cys110, Cys112, Cys137, and His139. The 'KMSKS' region motif lies at 248 to 252 (KLSKR). Lys251 is a binding site for ATP.

Belongs to the class-I aminoacyl-tRNA synthetase family. Glutamate--tRNA ligase type 1 subfamily. Monomer. It depends on Zn(2+) as a cofactor.

It is found in the cytoplasm. It catalyses the reaction tRNA(Glu) + L-glutamate + ATP = L-glutamyl-tRNA(Glu) + AMP + diphosphate. Catalyzes the attachment of glutamate to tRNA(Glu) in a two-step reaction: glutamate is first activated by ATP to form Glu-AMP and then transferred to the acceptor end of tRNA(Glu). The polypeptide is Glutamate--tRNA ligase (Histophilus somni (strain 129Pt) (Haemophilus somnus)).